The chain runs to 621 residues: 1-deoxy-D-xylulose-5-phosphate synthase (621 aa).

Residues His80 and 121-123 (GHS) contribute to the thiamine diphosphate site. Asp152 is a Mg(2+) binding site. Thiamine diphosphate contacts are provided by residues 153–154 (GA), Asn181, Tyr288, and Glu370. Asn181 provides a ligand contact to Mg(2+).

Belongs to the transketolase family. DXPS subfamily. In terms of assembly, homodimer. Mg(2+) serves as cofactor. Thiamine diphosphate is required as a cofactor.

The catalysed reaction is D-glyceraldehyde 3-phosphate + pyruvate + H(+) = 1-deoxy-D-xylulose 5-phosphate + CO2. It participates in metabolic intermediate biosynthesis; 1-deoxy-D-xylulose 5-phosphate biosynthesis; 1-deoxy-D-xylulose 5-phosphate from D-glyceraldehyde 3-phosphate and pyruvate: step 1/1. Its function is as follows. Catalyzes the acyloin condensation reaction between C atoms 2 and 3 of pyruvate and glyceraldehyde 3-phosphate to yield 1-deoxy-D-xylulose-5-phosphate (DXP). This is 1-deoxy-D-xylulose-5-phosphate synthase from Serratia proteamaculans (strain 568).